The following is a 548-amino-acid chain: Sterol esterase TGL1 (548 aa).

Residue Met1 is modified to N-acetylmethionine; partial. The Lumenal portion of the chain corresponds to 1 to 13; it reads MYFPFLGRLSITD. Residues 14–34 form a helical membrane-spanning segment; that stretch reads YIIVVLVYIESIISSVLKLIP. Residues 35-548 lie on the Cytoplasmic side of the membrane; it reads QPMINLFEWL…TTALDALNKE (514 aa). One can recognise an AB hydrolase-1 domain in the interval 107–402; the sequence is VVYLHHGLLM…NYEHLDLIWG (296 aa). The short motif at 199-203 is the GXSXG element; the sequence is GFSQG. Residue Ser201 is the Nucleophile of the active site. A Glycyl lysine isopeptide (Lys-Gly) (interchain with G-Cter in ubiquitin) cross-link involves residue Lys246. Residues Asp369 and His396 each act as charge relay system in the active site. 2 disordered regions span residues 449 to 477 and 496 to 516; these read TTHPTHGLSYRTHSADRSPLSVQADEADE and IDEDNENEHQDDTEDQIHKEQ. 2 positions are modified to phosphoserine: Ser462 and Ser466. The span at 502–516 shows a compositional bias: basic and acidic residues; it reads NEHQDDTEDQIHKEQ. Phosphoserine is present on residues Ser521 and Ser538. Positions 528–548 are disordered; the sequence is KDLRQLDANSSTTALDALNKE. Thr539 is subject to Phosphothreonine.

It belongs to the AB hydrolase superfamily. Not N-glycosylated.

The protein localises to the lipid droplet. The protein resides in the membrane. The catalysed reaction is a sterol ester + H2O = a sterol + a fatty acid + H(+). Functionally, mediates the hydrolysis of steryl esters (SE). Preferentially hydrolyzes ergosteryl and zymosteryl esters. Required for mobilization of SEs from lipid particles/droplets, thereby playing a central role in lipid metabolism and sterol homeostasis. Sterol intermediates stored in SE and set free by SE hydrolases are recycled to the sterol biosynthetic pathway and converted to the final product, ergosterol, in the endoplasmic reticulum. Also has weak lipase activity toward triglycerides at neutral pH, however, the physiological relevance of this activity is unclear. The sequence is that of Sterol esterase TGL1 (TGL1) from Saccharomyces cerevisiae (strain ATCC 204508 / S288c) (Baker's yeast).